Consider the following 107-residue polypeptide: Pro-corazonin (107 aa).

Residues 1–21 form the signal peptide; sequence MVNSQILILFILSLTITIVMC. Gln-22 is subject to Pyrrolidone carboxylic acid. Asparagine amide is present on Asn-32. Positions 88–107 are excised as a propeptide; sequence SFSENMINDHRQPAPTNNNY.

It belongs to the corazonin family. In terms of tissue distribution, in the adult brain, expressed in four neurons of the lateral protocerebrum project axons towards the retrocerebral complex.

The protein localises to the secreted. Its function is as follows. Cardioactive peptide. Corazonin is probably involved in the physiological regulation of the heart beat. The chain is Pro-corazonin from Apis mellifera (Honeybee).